Reading from the N-terminus, the 431-residue chain is MAVGAAAVTEVGDTASPVGSSGASGGAIASGSVARVGTATAVTALCGYAVIYLAARNLAPNGFSVFGVFWGAFGLVTGAANGLLQETTREVRSLGYLDVSADGRRTHPLRVSGMVGLGSLVVIAGSSPLWSGRVFAEARWLSVALLSIGLAGFCLHATLLGMLAGTNRWTQYGALMVADAVIRVVVAAATFVIGWQLVGFIWATVAGSVAWLIMLMTSPPTRAAARLMTPGATATFLRGAAHSIIAAGASAILVMGFPVLLKLTSNELGAQGGVVILAVTLTRAPLLVPLTAMQGNLIAHFVDERTERIRALIAPAALIGGVGAVGMLAAGVVGPWIMRVAFGSEYQSSSALLAWLTAAAVAIAMLTLTGAAAVAAALHRAYSLGWVGATVGSGLLLLLPLSLETRTVVALLCGPLVGIGVHLVALARTDE.

The next 11 helical transmembrane spans lie at 33-53, 63-83, 111-131, 143-163, 197-217, 241-261, 273-293, 318-338, 358-378, 383-403, and 407-427; these read VARVGTATAVTALCGYAVIYL, FSVFGVFWGAFGLVTGAANGL, VSGMVGLGSLVVIAGSSPLWS, VALLSIGLAGFCLHATLLGML, LVGFIWATVAGSVAWLIMLMT, AHSIIAAGASAILVMGFPVLL, GVVILAVTLTRAPLLVPLTAM, LIGGVGAVGMLAAGVVGPWIM, AAAVAIAMLTLTGAAAVAAAL, SLGWVGATVGSGLLLLLPLSL, and TVVALLCGPLVGIGVHLVALA.

To M.tuberculosis Rv1510 and Rv3630.

The protein resides in the cell membrane. This is an uncharacterized protein from Mycobacterium bovis (strain ATCC BAA-935 / AF2122/97).